Reading from the N-terminus, the 306-residue chain is MSEGRTDGDTWGPAQSVGATATMVAAARAVASQGPDALLDDPLAEPLVRAVGLDPFIRIVDGKLDFPDDPLFNRRARAEQITVRTRFFDDFFIDATEGGLRQAVILASGLDTRAYRLAWPAGTVVYEIDQPQVIAFKTDTLANLGAAPTAERRTISIDLRDDWPAALREGGFDVTRPTAWSAEGLLPYLPPEAQDRLFDNITALSAPGSRLATEHVPDPNAFSDERLARISERWQRLGLNLNAADLFYRGERNVVADYLTGKGWRVTPHPARQLYARNGFEFPEDEMRATFGEMSYVDATLTGGRG.

S-adenosyl-L-methionine contacts are provided by residues Asp-129 and 158 to 159 (DL).

It belongs to the UPF0677 family.

Functionally, exhibits S-adenosyl-L-methionine-dependent methyltransferase activity. The protein is Putative S-adenosyl-L-methionine-dependent methyltransferase MAV_4442 of Mycobacterium avium (strain 104).